The sequence spans 601 residues: MCSGPRKPSTPPLPQQQKEATVMAASLLLELAAADDVAAVRRVVEEEKVSLGVAGLWYGPSASGVARLGMERRTAAMVAALYGSTGVLGYVVAAAPAEAARASETDGATPLHMAAAGGAANAVAATRLLLAAGASVDALSASGLRAGDLLPRATAAEKAIRLLLKSPAVSPSSSPKKSASPPSPPPPQEAKKEYPPDLTLPDLKSGLFSTDEFRMYSFKVKPCSRAYSHDWTECPFVHPGENARRRDPRRYSYSCVPCPEFRKGGSCRKGDACEYAHGVFECWLHPAQYRTRLCKDEVGCARRICFFAHKPDELRAVNPSAVSVGMQPTVSSPRSSPPNGLDMAAAAAAMMSPAWPSSPASRLKTALGARELDFDLEMLALDQYQQKLFDKVSGAPSPRASWGAAANGLATASPARAVPDYTDLLGSVDPAMLSQLHALSLKQAGDMPAYSSMADTTQMHMPTSPMVGGANTAFGLDHSMAKAIMSSRASAFAKRSQSFIDRGGRAPAARSLMSPATTGAPSILSDWGSPDGKLDWGVQGDELHKLRKSASFAFRGQSAMPVATHAAAAEPDVSWVNSLVKDGHAAGDIFAQWPEQEQMVA.

ANK repeat units follow at residues 71-101 (ERRT…EAAR) and 106-138 (DGAT…SVDA). Residues 167 to 180 (PAVSPSSSPKKSAS) show a composition bias toward low complexity. Residues 167-203 (PAVSPSSSPKKSASPPSPPPPQEAKKEYPPDLTLPDL) form a disordered region. 2 C3H1-type zinc fingers span residues 252–280 (SYSC…HGVF) and 288–312 (QYRT…HKPD).

The sequence is that of Zinc finger CCCH domain-containing protein 33 from Oryza sativa subsp. japonica (Rice).